The chain runs to 136 residues: Protein NrdI (136 aa).

It belongs to the NrdI family.

Probably involved in ribonucleotide reductase function. This is Protein NrdI from Salmonella paratyphi A (strain ATCC 9150 / SARB42).